The chain runs to 481 residues: Histidine--tRNA ligase, cytoplasmic (481 aa).

The tract at residues 1-48 (MSEPVVDNVTNKVEKMEVKEKTSAPPKEKKEKKSNKVQLKTPKGTQDY) is disordered. A compositionally biased stretch (basic and acidic residues) spans 12-31 (KVEKMEVKEKTSAPPKEKKE).

It belongs to the class-II aminoacyl-tRNA synthetase family.

It localises to the cytoplasm. The enzyme catalyses tRNA(His) + L-histidine + ATP = L-histidyl-tRNA(His) + AMP + diphosphate + H(+). In Dictyostelium discoideum (Social amoeba), this protein is Histidine--tRNA ligase, cytoplasmic (hisS).